The sequence spans 176 residues: Large ribosomal subunit protein uL6 (176 aa).

The protein belongs to the universal ribosomal protein uL6 family. As to quaternary structure, part of the 50S ribosomal subunit.

Its function is as follows. This protein binds to the 23S rRNA, and is important in its secondary structure. It is located near the subunit interface in the base of the L7/L12 stalk, and near the tRNA binding site of the peptidyltransferase center. The chain is Large ribosomal subunit protein uL6 from Lactobacillus helveticus (strain DPC 4571).